Here is an 880-residue protein sequence, read N- to C-terminus: Protein translocase subunit SecA (880 aa).

ATP is bound by residues Q86, 104–108 (GEGKT), and D511. The segment at 837 to 871 (AQKIQRSDGDGARRPVEKPKKIGRNDPCPCGSGKK) is disordered. The segment covering 841-860 (QRSDGDGARRPVEKPKKIGR) has biased composition (basic and acidic residues). C864, C866, C875, and C876 together coordinate Zn(2+).

It belongs to the SecA family. In terms of assembly, monomer and homodimer. Part of the essential Sec protein translocation apparatus which comprises SecA, SecYEG and auxiliary proteins SecDF. Other proteins may also be involved. The cofactor is Zn(2+).

Its subcellular location is the cell inner membrane. The protein resides in the cytoplasm. The enzyme catalyses ATP + H2O + cellular proteinSide 1 = ADP + phosphate + cellular proteinSide 2.. Its function is as follows. Part of the Sec protein translocase complex. Interacts with the SecYEG preprotein conducting channel. Has a central role in coupling the hydrolysis of ATP to the transfer of proteins into and across the cell membrane, serving as an ATP-driven molecular motor driving the stepwise translocation of polypeptide chains across the membrane. This is Protein translocase subunit SecA from Thermodesulfovibrio yellowstonii (strain ATCC 51303 / DSM 11347 / YP87).